The sequence spans 236 residues: Rho-related GTP-binding protein RhoV (236 aa).

A disordered region spans residues 1–27; that stretch reads MPPRELSEAESSPLRSPTPPPGRGSAS. S25 carries the post-translational modification Phosphoserine. Residues 38-45, 85-89, and 143-146 contribute to the GTP site; these read GDGAVGKS, DTAGQ, and TQAD. A lipid anchor (S-palmitoyl cysteine) is attached at C234.

The protein belongs to the small GTPase superfamily. Rho family. In terms of assembly, interacts with PAK2. Mg(2+) is required as a cofactor.

The protein resides in the cell membrane. It is found in the endosome membrane. Plays a role in the control of the actin cytoskeleton via activation of the JNK pathway. This Bos taurus (Bovine) protein is Rho-related GTP-binding protein RhoV.